The following is a 229-amino-acid chain: Urease accessory protein UreF (229 aa).

Belongs to the UreF family. As to quaternary structure, ureD, UreF and UreG form a complex that acts as a GTP-hydrolysis-dependent molecular chaperone, activating the urease apoprotein by helping to assemble the nickel containing metallocenter of UreC. The UreE protein probably delivers the nickel.

The protein localises to the cytoplasm. In terms of biological role, required for maturation of urease via the functional incorporation of the urease nickel metallocenter. The sequence is that of Urease accessory protein UreF from Staphylococcus epidermidis (strain ATCC 12228 / FDA PCI 1200).